The sequence spans 279 residues: 2-dehydro-3-deoxyphosphooctonate aldolase (279 aa).

It belongs to the KdsA family.

The protein localises to the cytoplasm. The enzyme catalyses D-arabinose 5-phosphate + phosphoenolpyruvate + H2O = 3-deoxy-alpha-D-manno-2-octulosonate-8-phosphate + phosphate. It functions in the pathway carbohydrate biosynthesis; 3-deoxy-D-manno-octulosonate biosynthesis; 3-deoxy-D-manno-octulosonate from D-ribulose 5-phosphate: step 2/3. Its pathway is bacterial outer membrane biogenesis; lipopolysaccharide biosynthesis. The chain is 2-dehydro-3-deoxyphosphooctonate aldolase from Methylobacillus flagellatus (strain ATCC 51484 / DSM 6875 / VKM B-1610 / KT).